A 243-amino-acid chain; its full sequence is 1-(5-phosphoribosyl)-5-[(5-phosphoribosylamino)methylideneamino] imidazole-4-carboxamide isomerase (243 aa).

The active-site Proton acceptor is the Asp-9. Asp-131 acts as the Proton donor in catalysis.

Belongs to the HisA/HisF family.

It is found in the cytoplasm. The enzyme catalyses 1-(5-phospho-beta-D-ribosyl)-5-[(5-phospho-beta-D-ribosylamino)methylideneamino]imidazole-4-carboxamide = 5-[(5-phospho-1-deoxy-D-ribulos-1-ylimino)methylamino]-1-(5-phospho-beta-D-ribosyl)imidazole-4-carboxamide. The protein operates within amino-acid biosynthesis; L-histidine biosynthesis; L-histidine from 5-phospho-alpha-D-ribose 1-diphosphate: step 4/9. The chain is 1-(5-phosphoribosyl)-5-[(5-phosphoribosylamino)methylideneamino] imidazole-4-carboxamide isomerase from Campylobacter jejuni (strain RM1221).